Consider the following 435-residue polypeptide: Asparagine--tRNA ligase (435 aa).

Belongs to the class-II aminoacyl-tRNA synthetase family. As to quaternary structure, homodimer.

The protein localises to the cytoplasm. The enzyme catalyses tRNA(Asn) + L-asparagine + ATP = L-asparaginyl-tRNA(Asn) + AMP + diphosphate + H(+). This Leptospira interrogans serogroup Icterohaemorrhagiae serovar Lai (strain 56601) protein is Asparagine--tRNA ligase.